Here is a 181-residue protein sequence, read N- to C-terminus: Inner membrane-spanning protein YciB (181 aa).

5 consecutive transmembrane segments (helical) span residues 24 to 44 (SATA…WLRH), 49 to 69 (NMLW…LILQ), 81 to 101 (LYWL…KNLI), 119 to 139 (LNIS…YVAY), and 149 to 169 (FKLF…ALLL).

The protein belongs to the YciB family.

The protein localises to the cell inner membrane. In terms of biological role, plays a role in cell envelope biogenesis, maintenance of cell envelope integrity and membrane homeostasis. The sequence is that of Inner membrane-spanning protein YciB from Nitrosomonas eutropha (strain DSM 101675 / C91 / Nm57).